The sequence spans 181 residues: uncharacterized protein (181 aa).

This is an uncharacterized protein from Borreliella burgdorferi (strain ATCC 35210 / DSM 4680 / CIP 102532 / B31) (Borrelia burgdorferi).